The chain runs to 501 residues: MSSSAMPDVPAPLTNLQFKYTKIFINNEWHSSVSGKKFPVFNPATEEKLCEVEEGDKEDVDKAVKAARQAFQIGSPWRTMDASERGRLLNKLADLIERDHLLLATMEAMNGGKLFSNAYLMDLGGCIKTLRYCAGWADKIQGRTIPMDGNFFTYTRSEPVGVCGQIIPWNFPLLMFLWKIGPALSCGNTVVVKPAEQTPLTALHMGSLIKEAGFPPGVVNIVPGYGPTAGAAISSHMDVDKVAFTGSTEVGKLIKEAAGKSNLKRVSLELGGKSPCIVFADADLDNAVEFAHQGVFYHQGQCCIAASRLFVEESIYDEFVRRSVERAKKYVLGNPLTPGVSQGPQIDKEQYEKILDLIESGKKEGAKLECGGGPWGNKGYFIQPTVFSDVTDDMRIAKEEIFGPVQQIMKFKSLDDVIKRANNTFYGLSAGIFTNDIDKAITVSSALQSGTVWVNCYSVVSAQCPFGGFKMSGNGRELGEYGFHEYTEVKTVTIKISQKNS.

Position 2 is an N-acetylserine (serine 2). N6-acetyllysine is present on residues lysine 91 and lysine 128. NAD(+) is bound by residues 167 to 170 (IPWN), 193 to 196 (KPAE), 226 to 227 (GP), and 246 to 247 (GS). An N6-acetyllysine modification is found at lysine 252. Residue glutamate 269 is the Proton acceptor of the active site. An NAD(+)-binding site is contributed by 269–271 (ELG). Cysteine 303 serves as the catalytic Nucleophile. Residues 336-501 (LTPGVSQGPQ…VTIKISQKNS (166 aa)) are mediates interaction with PRMT3. Threonine 337 is subject to Phosphothreonine. 349-353 (EQYEK) serves as a coordination point for NAD(+). Residues lysine 353 and lysine 367 each carry the N6-acetyllysine modification. 400–402 (EIF) lines the NAD(+) pocket. At lysine 410 the chain carries N6-acetyllysine. Serine 413 bears the Phosphoserine mark. 2 positions are modified to N6-acetyllysine: lysine 419 and lysine 495.

This sequence belongs to the aldehyde dehydrogenase family. As to quaternary structure, homotetramer. Interacts with PRMT3; the interaction is direct, inhibits ALDH1A1 aldehyde dehydrogenase activity and is independent of the methyltransferase activity of PRMT3. The N-terminus is blocked most probably by acetylation. As to expression, expressed in muscle, liver, small intestine, kidney, brain, lung, heart but not detected in erythrocytes (at protein level).

It is found in the cytoplasm. It localises to the cytosol. Its subcellular location is the cell projection. The protein localises to the axon. It carries out the reaction an aldehyde + NAD(+) + H2O = a carboxylate + NADH + 2 H(+). The catalysed reaction is all-trans-retinal + NAD(+) + H2O = all-trans-retinoate + NADH + 2 H(+). It catalyses the reaction 9-cis-retinal + NAD(+) + H2O = 9-cis-retinoate + NADH + 2 H(+). The enzyme catalyses 11-cis-retinal + NAD(+) + H2O = 11-cis-retinoate + NADH + 2 H(+). It carries out the reaction 13-cis-retinal + NAD(+) + H2O = 13-cis-retinoate + NADH + 2 H(+). The catalysed reaction is 3-deoxyglucosone + NAD(+) + H2O = 2-dehydro-3-deoxy-D-gluconate + NADH + 2 H(+). It catalyses the reaction (E)-4-hydroxynon-2-enal + NAD(+) + H2O = (E)-4-hydroxynon-2-enoate + NADH + 2 H(+). The enzyme catalyses malonaldehyde + NAD(+) + H2O = 3-oxopropanoate + NADH + 2 H(+). It carries out the reaction hexanal + NAD(+) + H2O = hexanoate + NADH + 2 H(+). The catalysed reaction is propanal + NAD(+) + H2O = propanoate + NADH + 2 H(+). It catalyses the reaction acetaldehyde + NAD(+) + H2O = acetate + NADH + 2 H(+). The enzyme catalyses benzaldehyde + NAD(+) + H2O = benzoate + NADH + 2 H(+). It carries out the reaction 4-aminobutanal + NAD(+) + H2O = 4-aminobutanoate + NADH + 2 H(+). It participates in cofactor metabolism; retinol metabolism. Functionally, cytosolic dehydrogenase that catalyzes the irreversible oxidation of a wide range of aldehydes to their corresponding carboxylic acid. Functions downstream of retinol dehydrogenases and catalyzes the oxidation of retinaldehyde into retinoic acid, the second step in the oxidation of retinol/vitamin A into retinoic acid. This pathway is crucial to control the levels of retinol and retinoic acid, two important molecules which excess can be teratogenic and cytotoxic. Also oxidizes aldehydes resulting from lipid peroxidation like (E)-4-hydroxynon-2-enal/HNE, malonaldehyde and hexanal that form protein adducts and are highly cytotoxic. By participating for instance to the clearance of (E)-4-hydroxynon-2-enal/HNE in the lens epithelium prevents the formation of HNE-protein adducts and lens opacification. Also functions downstream of fructosamine-3-kinase in the fructosamine degradation pathway by catalyzing the oxidation of 3-deoxyglucosone, the carbohydrate product of fructosamine 3-phosphate decomposition, which is itself a potent glycating agent that may react with lysine and arginine side-chains of proteins. Also has an aminobutyraldehyde dehydrogenase activity and is probably part of an alternative pathway for the biosynthesis of GABA/4-aminobutanoate in midbrain, thereby playing a role in GABAergic synaptic transmission. In Bos taurus (Bovine), this protein is Aldehyde dehydrogenase 1A1.